The primary structure comprises 201 residues: Small ribosomal subunit protein uS4 (201 aa).

In terms of domain architecture, S4 RNA-binding spans 92-155; the sequence is ARLDNVVFRL…KSLEVIANSL (64 aa).

It belongs to the universal ribosomal protein uS4 family. Part of the 30S ribosomal subunit. Contacts protein S5. The interaction surface between S4 and S5 is involved in control of translational fidelity.

In terms of biological role, one of the primary rRNA binding proteins, it binds directly to 16S rRNA where it nucleates assembly of the body of the 30S subunit. Functionally, with S5 and S12 plays an important role in translational accuracy. The sequence is that of Small ribosomal subunit protein uS4 from Phocaeicola vulgatus (strain ATCC 8482 / DSM 1447 / JCM 5826 / CCUG 4940 / NBRC 14291 / NCTC 11154) (Bacteroides vulgatus).